The sequence spans 176 residues: uncharacterized protein (176 aa).

This is an uncharacterized protein from Caenorhabditis elegans.